A 264-amino-acid chain; its full sequence is Small ribosomal subunit protein eS1 (264 aa).

The segment at Gly233 to Val264 is disordered. Positions Ala242–Gly255 are enriched in basic and acidic residues.

This sequence belongs to the eukaryotic ribosomal protein eS1 family. Component of the small ribosomal subunit. Mature ribosomes consist of a small (40S) and a large (60S) subunit. The 40S subunit contains about 33 different proteins and 1 molecule of RNA (18S). The 60S subunit contains about 49 different proteins and 3 molecules of RNA (28S, 5.8S and 5S). Part of the small subunit (SSU) processome, composed of more than 70 proteins and the RNA chaperone small nucleolar RNA (snoRNA) U3.

Its subcellular location is the cytoplasm. The protein resides in the nucleus. The protein localises to the nucleolus. Its function is as follows. Component of the small ribosomal subunit. The ribosome is a large ribonucleoprotein complex responsible for the synthesis of proteins in the cell. Part of the small subunit (SSU) processome, first precursor of the small eukaryotic ribosomal subunit. During the assembly of the SSU processome in the nucleolus, many ribosome biogenesis factors, an RNA chaperone and ribosomal proteins associate with the nascent pre-rRNA and work in concert to generate RNA folding, modifications, rearrangements and cleavage as well as targeted degradation of pre-ribosomal RNA by the RNA exosome. May play a role during erythropoiesis. The sequence is that of Small ribosomal subunit protein eS1 (rps3a) from Xenopus tropicalis (Western clawed frog).